A 333-amino-acid polypeptide reads, in one-letter code: Procathepsin L (333 aa).

Residues 1–17 (MNPTFILAALCLGIASA) form the signal peptide. A propeptide spans 18 to 113 (TLTFNHSLEA…KVFQEPLFYE (96 aa)) (activation peptide). Glu122 provides a ligand contact to Zn(2+). Disulfide bonds link Cys135-Cys178 and Cys169-Cys211. The active site involves Cys138. Residues Glu163, Asp184, Glu199, Glu205, Glu209, Asp227, Asp250, His253, Asp273, and Asp275 each coordinate Zn(2+). A disulfide bridge links Cys269 with Cys322. His276 is an active-site residue. Residues 289–291 (ESD) constitute a propeptide that is removed on maturation. Asn300 is a catalytic residue.

The protein belongs to the peptidase C1 family. As to quaternary structure, dimer of a heavy and a light chain linked by disulfide bonds. Interacts with Long isoform of CD74/Ii chain; the interaction stabilizes the conformation of mature CTSL. During export along the endocytic pathway, pro-CTSL undergoes several proteolytic cleavages to generate the CTSL single-chain and two-chain mature forms, composed of a heavy chain linked to a light chain by disulfide bonds. Autocleavage; produces the single-chain CTSL after cleavage of the propeptide. The cleavage can be intermolecular.

It is found in the lysosome. It localises to the apical cell membrane. The protein resides in the cytoplasmic vesicle. Its subcellular location is the secretory vesicle. The protein localises to the chromaffin granule. It is found in the secreted. It localises to the extracellular space. The enzyme catalyses Specificity close to that of papain. As compared to cathepsin B, cathepsin L exhibits higher activity toward protein substrates, but has little activity on Z-Arg-Arg-NHMec, and no peptidyl-dipeptidase activity.. Inhibited by the propeptide produced by autocleavage. Long isoform of CD74/Ii chain stabilizes the conformation of mature CTSL by binding to its active site and serving as a chaperone to help maintain a pool of mature enzyme in endocytic compartments and extracellular space of APCs. IFNG enhances the conversion into the CTSL mature and active form. Inhibited by CST6. Inhibited by the glycopeptide antibiotic teicoplanin. Inhibited by amantadine. Functionally, thiol protease important for the overall degradation of proteins in lysosomes. Plays a critical for normal cellular functions such as general protein turnover, antigen processing and bone remodeling. Involved in the solubilization of cross-linked TG/thyroglobulin and in the subsequent release of thyroid hormone thyroxine (T4) by limited proteolysis of TG/thyroglobulin in the thyroid follicle lumen. In neuroendocrine chromaffin cells secretory vesicles, catalyzes the prohormone proenkephalin processing to the active enkephalin peptide neurotransmitter. In thymus, regulates CD4(+) T cell positive selection by generating the major histocompatibility complex class II (MHCII) bound peptide ligands presented by cortical thymic epithelial cells. Also mediates invariant chain processing in cortical thymic epithelial cells. Major elastin-degrading enzyme at neutral pH. Accumulates as a mature and active enzyme in the extracellular space of antigen presenting cells (APCs) to regulate degradation of the extracellular matrix in the course of inflammation. Secreted form generates endostatin from COL18A1. Critical for cardiac morphology and function. Plays an important role in hair follicle morphogenesis and cycling, as well as epidermal differentiation. Required for maximal stimulation of steroidogenesis by TIMP1. The protein is Procathepsin L (CTSL) of Chlorocebus aethiops (Green monkey).